The following is a 181-amino-acid chain: Large ribosomal subunit protein uL5 (181 aa).

The protein belongs to the universal ribosomal protein uL5 family. As to quaternary structure, part of the 50S ribosomal subunit; part of the 5S rRNA/L5/L18/L25 subcomplex. Contacts the 5S rRNA and the P site tRNA. Forms a bridge to the 30S subunit in the 70S ribosome.

In terms of biological role, this is one of the proteins that bind and probably mediate the attachment of the 5S RNA into the large ribosomal subunit, where it forms part of the central protuberance. In the 70S ribosome it contacts protein S13 of the 30S subunit (bridge B1b), connecting the 2 subunits; this bridge is implicated in subunit movement. Contacts the P site tRNA; the 5S rRNA and some of its associated proteins might help stabilize positioning of ribosome-bound tRNAs. The protein is Large ribosomal subunit protein uL5 of Mycoplasmopsis pulmonis (strain UAB CTIP) (Mycoplasma pulmonis).